Here is a 918-residue protein sequence, read N- to C-terminus: Calcium-transporting ATPase type 2C member 1 (918 aa).

Topologically, residues 1-75 (MKVARFQKIP…SEDEPLWKKY (75 aa)) are cytoplasmic. The helical transmembrane segment at 76 to 96 (ISQFKNPLIMLLLASAVISVL) threads the bilayer. The Extracellular segment spans residues 97 to 98 (MH). A helical transmembrane segment spans residues 99–119 (QFDDAVSITVAILIVVTVAFV). Residues 120-267 (QEYRSEKSLE…LQKSMDLLGK (148 aa)) lie on the Cytoplasmic side of the membrane. Residues 268–288 (QLSFYSFGIIGIIMLVGWLLG) traverse the membrane as a helical segment. Residues 289 to 302 (KDILEMFTISVSLA) are Extracellular-facing. The chain crosses the membrane as a helical span at residues 303–323 (VAAIPEGLPIVVTVTLALGVM). Residues 324 to 703 (RMVKKRAIVK…IYNNIKNFVR (380 aa)) are Cytoplasmic-facing. Aspartate 350 functions as the 4-aspartylphosphate intermediate in the catalytic mechanism. 2 residues coordinate Mg(2+): aspartate 643 and aspartate 647. The helical transmembrane segment at 704-724 (FQLSTSIAALTLISLATLMNF) threads the bilayer. The Extracellular segment spans residues 725–732 (PNPLNAMQ). Residues 733–753 (ILWINIIMDGPPAQSLGVEPV) traverse the membrane as a helical segment. The Cytoplasmic portion of the chain corresponds to 754–773 (DKDVIRKPPRNWKDSILTKN). A helical membrane pass occupies residues 774–794 (LILKILVSSIIIVCGTLFVFW). The Extracellular segment spans residues 795 to 842 (RELRDNVITPRDTTMTFTCFVFFDMFNALSSRSQTKSVFEIGLCSNKM). The helical transmembrane segment at 843-863 (FCYAVLGSIMGQLLVIYFPPL) threads the bilayer. The Cytoplasmic segment spans residues 864–873 (QKVFQTESLS). Residues 874–894 (ILDLLFLLGLTSSVCIVAEII) form a helical membrane-spanning segment. Topologically, residues 895–918 (KKVERSREKIQKHVSSTSSSFLEV) are extracellular.

It belongs to the cation transport ATPase (P-type) (TC 3.A.3) family. Type IIA subfamily. In terms of assembly, monomer. Homodimer.

It localises to the golgi apparatus. The protein resides in the trans-Golgi network membrane. The protein localises to the golgi stack membrane. The catalysed reaction is Ca(2+)(in) + ATP + H2O = Ca(2+)(out) + ADP + phosphate + H(+). It carries out the reaction Mn(2+)(in) + ATP + H2O = Mn(2+)(out) + ADP + phosphate + H(+). ATP-driven pump that supplies the Golgi apparatus with Ca(2+) and Mn(2+) ions, both essential cofactors for processing and trafficking of newly synthesized proteins in the secretory pathway. Within a catalytic cycle, acquires Ca(2+) or Mn(2+) ions on the cytoplasmic side of the membrane and delivers them to the lumenal side. The transfer of ions across the membrane is coupled to ATP hydrolysis and is associated with a transient phosphorylation that shifts the pump conformation from inward-facing to outward-facing state. Plays a primary role in the maintenance of Ca(2+) homeostasis in the trans-Golgi compartment with a functional impact on Golgi and post-Golgi protein sorting as well as a structural impact on cisternae morphology. Responsible for loading the Golgi stores with Ca(2+) ions in keratinocytes, contributing to keratinocyte differentiation and epidermis integrity. Participates in Ca(2+) and Mn(2+) ions uptake into the Golgi store of hippocampal neurons and regulates protein trafficking required for neural polarity. May also play a role in the maintenance of Ca(2+) and Mn(2+) homeostasis and signaling in the cytosol while preventing cytotoxicity. This chain is Calcium-transporting ATPase type 2C member 1 (ATP2C1), found in Pongo abelii (Sumatran orangutan).